The sequence spans 191 residues: Holliday junction branch migration complex subunit RuvA (191 aa).

The domain I stretch occupies residues 1 to 64; sequence MIGKLTGTLL…EDAQLLYGFA (64 aa). The interval 65–140 is domain II; it reads TAPERQAFRA…KLGADLGASH (76 aa). Residues 140 to 142 are flexible linker; it reads HGP. The domain III stretch occupies residues 143-191; that stretch reads AVSGAQADILQALLALGYNDKEAAAALKALPAQVEVSDGIKWALKALTK.

It belongs to the RuvA family. Homotetramer. Forms an RuvA(8)-RuvB(12)-Holliday junction (HJ) complex. HJ DNA is sandwiched between 2 RuvA tetramers; dsDNA enters through RuvA and exits via RuvB. An RuvB hexamer assembles on each DNA strand where it exits the tetramer. Each RuvB hexamer is contacted by two RuvA subunits (via domain III) on 2 adjacent RuvB subunits; this complex drives branch migration. In the full resolvosome a probable DNA-RuvA(4)-RuvB(12)-RuvC(2) complex forms which resolves the HJ.

The protein resides in the cytoplasm. Functionally, the RuvA-RuvB-RuvC complex processes Holliday junction (HJ) DNA during genetic recombination and DNA repair, while the RuvA-RuvB complex plays an important role in the rescue of blocked DNA replication forks via replication fork reversal (RFR). RuvA specifically binds to HJ cruciform DNA, conferring on it an open structure. The RuvB hexamer acts as an ATP-dependent pump, pulling dsDNA into and through the RuvAB complex. HJ branch migration allows RuvC to scan DNA until it finds its consensus sequence, where it cleaves and resolves the cruciform DNA. This is Holliday junction branch migration complex subunit RuvA from Verminephrobacter eiseniae (strain EF01-2).